The primary structure comprises 107 residues: U1-lycotoxin-Ls1w (107 aa).

Residues 1 to 20 (MLKVLVVVALLVTLISYSSS) form the signal peptide. A propeptide spanning residues 21-41 (EGIDDLEADELLSLMANEQTR) is cleaved from the precursor. 4 disulfide bridges follow: cysteine 44/cysteine 59, cysteine 51/cysteine 68, cysteine 58/cysteine 86, and cysteine 70/cysteine 84.

This sequence belongs to the neurotoxin 19 (CSTX) family. 04 (U1-Lctx) subfamily. In terms of tissue distribution, expressed by the venom gland.

It is found in the secreted. This chain is U1-lycotoxin-Ls1w, found in Lycosa singoriensis (Wolf spider).